Here is a 95-residue protein sequence, read N- to C-terminus: Toxin HigB-1 (95 aa).

Its function is as follows. Toxic component of a type II toxin-antitoxin (TA) system. Inhibits translation by cleavage of mRNA. In Vibrio cholerae serotype O1 (strain ATCC 39315 / El Tor Inaba N16961), this protein is Toxin HigB-1 (higB-1).